A 139-amino-acid polypeptide reads, in one-letter code: Mitochondrial intermembrane space import and assembly protein 40 (139 aa).

3 disulfide bridges follow: cysteine 53–cysteine 55, cysteine 64–cysteine 97, and cysteine 74–cysteine 87. The region spanning 61-105 is the CHCH domain; it reads SGPCGEQFKSAFSCFHYSQEEIKGSDCLDQFRAMQECMQKYPDIY. Short sequence motifs (cx9C motif) lie at residues 64–74 and 87–97; these read CGEQFKSAFSC and CLDQFRAMQEC. The interval 102-139 is disordered; it reads PDIYPQEDDEDEAEKEKQNKEAEAFSTETSDTKEESSS. The span at 115 to 124 shows a compositional bias: basic and acidic residues; it reads EKEKQNKEAE.

Monomer. Can form homooligomers.

The protein localises to the mitochondrion intermembrane space. In terms of biological role, central component of a redox-sensitive mitochondrial intermembrane space import machinery which is required for the biogenesis of respiratory chain complexes. Functions as chaperone and catalyzes the formation of disulfide bonds in substrate proteins, such as COX17 or MICU1. Required for the import and folding of small cysteine-containing proteins (small Tim) in the mitochondrial intermembrane space (IMS). Precursor proteins to be imported into the IMS are translocated in their reduced form into the mitochondria. This chain is Mitochondrial intermembrane space import and assembly protein 40 (chchd4), found in Xenopus tropicalis (Western clawed frog).